A 349-amino-acid polypeptide reads, in one-letter code: S-adenosylmethionine:tRNA ribosyltransferase-isomerase (349 aa).

It belongs to the QueA family. Monomer.

Its subcellular location is the cytoplasm. The catalysed reaction is 7-aminomethyl-7-carbaguanosine(34) in tRNA + S-adenosyl-L-methionine = epoxyqueuosine(34) in tRNA + adenine + L-methionine + 2 H(+). It functions in the pathway tRNA modification; tRNA-queuosine biosynthesis. In terms of biological role, transfers and isomerizes the ribose moiety from AdoMet to the 7-aminomethyl group of 7-deazaguanine (preQ1-tRNA) to give epoxyqueuosine (oQ-tRNA). This chain is S-adenosylmethionine:tRNA ribosyltransferase-isomerase, found in Ruegeria sp. (strain TM1040) (Silicibacter sp.).